The primary structure comprises 174 residues: UPF0398 protein YfdB (174 aa).

This sequence belongs to the UPF0398 family.

This chain is UPF0398 protein YfdB (yfdB), found in Lactococcus lactis subsp. lactis (strain IL1403) (Streptococcus lactis).